A 541-amino-acid polypeptide reads, in one-letter code: Protein ST7 homolog (541 aa).

Residues 15–35 (FYVALTGTSSLISGLILIFEW) form a helical membrane-spanning segment. A disordered region spans residues 62-116 (DAQSDSSNGSGSSTSSGSSSSSNGGGGGGGGGAGGGGPGAGGGTNSTTTTGTQMP). Positions 67 to 83 (SSNGSGSSTSSGSSSSS) are enriched in low complexity. Residues 84 to 105 (NGGGGGGGGGAGGGGPGAGGGT) show a composition bias toward gly residues. Residues 476–496 (LPFFILFTAGLCSFTALLALL) traverse the membrane as a helical segment.

The protein belongs to the ST7 family.

Its subcellular location is the membrane. This is Protein ST7 homolog from Drosophila pseudoobscura pseudoobscura (Fruit fly).